Here is a 366-residue protein sequence, read N- to C-terminus: Chorismate synthase (366 aa).

NADP(+)-binding residues include R48 and R54. FMN-binding positions include 125-127, 238-239, G278, 293-297, and R319; these read RSS, NA, and KPTSS.

The protein belongs to the chorismate synthase family. Homotetramer. The cofactor is FMNH2.

It catalyses the reaction 5-O-(1-carboxyvinyl)-3-phosphoshikimate = chorismate + phosphate. It participates in metabolic intermediate biosynthesis; chorismate biosynthesis; chorismate from D-erythrose 4-phosphate and phosphoenolpyruvate: step 7/7. Its function is as follows. Catalyzes the anti-1,4-elimination of the C-3 phosphate and the C-6 proR hydrogen from 5-enolpyruvylshikimate-3-phosphate (EPSP) to yield chorismate, which is the branch point compound that serves as the starting substrate for the three terminal pathways of aromatic amino acid biosynthesis. This reaction introduces a second double bond into the aromatic ring system. The chain is Chorismate synthase from Dechloromonas aromatica (strain RCB).